The chain runs to 112 residues: UPF0342 protein STER_0693 (112 aa).

Belongs to the UPF0342 family.

The polypeptide is UPF0342 protein STER_0693 (Streptococcus thermophilus (strain ATCC BAA-491 / LMD-9)).